The sequence spans 220 residues: Probable septum site-determining protein MinC (220 aa).

This sequence belongs to the MinC family. As to quaternary structure, interacts with MinD and FtsZ.

Its function is as follows. Cell division inhibitor that blocks the formation of polar Z ring septums. Rapidly oscillates between the poles of the cell to destabilize FtsZ filaments that have formed before they mature into polar Z rings. Prevents FtsZ polymerization. This chain is Probable septum site-determining protein MinC, found in Vibrio campbellii (strain ATCC BAA-1116).